A 55-amino-acid polypeptide reads, in one-letter code: Ferredoxin (55 aa).

2 consecutive 4Fe-4S ferredoxin-type domains span residues 2-27 (YKIT…SESD) and 28-55 (AVRV…IVEG). 8 residues coordinate [4Fe-4S] cluster: Cys8, Cys11, Cys14, Cys18, Cys37, Cys40, Cys43, and Cys47.

It depends on [4Fe-4S] cluster as a cofactor.

Its function is as follows. Ferredoxins are iron-sulfur proteins that transfer electrons in a wide variety of metabolic reactions. This Clostridium sp. (strain M-E) protein is Ferredoxin.